The chain runs to 454 residues: UPF0210 protein Ppro_0613 (454 aa).

The protein belongs to the UPF0210 family. Homodimer.

This is UPF0210 protein Ppro_0613 from Pelobacter propionicus (strain DSM 2379 / NBRC 103807 / OttBd1).